The primary structure comprises 219 residues: Large ribosomal subunit protein uL4c (219 aa).

Residues 53–81 (REHTASTKTKSQVRGGGKKPWKQKGTGRA) are disordered. Over residues 68–79 (GGKKPWKQKGTG) the composition is skewed to basic residues.

It belongs to the universal ribosomal protein uL4 family. In terms of assembly, part of the 50S ribosomal subunit.

It is found in the plastid. The protein resides in the chloroplast. In terms of biological role, probably binds the 23S rRNA. The sequence is that of Large ribosomal subunit protein uL4c (rpl4) from Cyanidium caldarium (Red alga).